We begin with the raw amino-acid sequence, 99 residues long: Small ribosomal subunit protein bS20 (99 aa).

Basic residues predominate over residues 1–20; the sequence is MASAKPKKKNPRLASGRKRV. A disordered region spans residues 1–21; sequence MASAKPKKKNPRLASGRKRVR.

It belongs to the bacterial ribosomal protein bS20 family.

Functionally, binds directly to 16S ribosomal RNA. This chain is Small ribosomal subunit protein bS20, found in Verminephrobacter eiseniae (strain EF01-2).